The chain runs to 456 residues: Bifunctional protein GlmU (456 aa).

The interval 1 to 227 is pyrophosphorylase; it reads MKLRVVILAA…AQEVEGANNR (227 aa). UDP-N-acetyl-alpha-D-glucosamine is bound by residues 8-11, K22, Q73, 78-79, 100-102, G137, E152, N167, and N225; these read LAAG, GT, and YGD. D102 is a binding site for Mg(2+). Position 225 (N225) interacts with Mg(2+). Residues 228–248 are linker; it reads QQLASLERALQQRQAEELMTQ. The segment at 249–456 is N-acetyltransferase; sequence GVTLIDPARF…WQRPQSKKGT (208 aa). Residues R331 and K349 each contribute to the UDP-N-acetyl-alpha-D-glucosamine site. H361 acts as the Proton acceptor in catalysis. Residues Y364 and N375 each coordinate UDP-N-acetyl-alpha-D-glucosamine. Residues A378, 384–385, S403, A421, and R438 contribute to the acetyl-CoA site; that span reads NY.

This sequence in the N-terminal section; belongs to the N-acetylglucosamine-1-phosphate uridyltransferase family. In the C-terminal section; belongs to the transferase hexapeptide repeat family. As to quaternary structure, homotrimer. It depends on Mg(2+) as a cofactor.

It localises to the cytoplasm. It carries out the reaction alpha-D-glucosamine 1-phosphate + acetyl-CoA = N-acetyl-alpha-D-glucosamine 1-phosphate + CoA + H(+). It catalyses the reaction N-acetyl-alpha-D-glucosamine 1-phosphate + UTP + H(+) = UDP-N-acetyl-alpha-D-glucosamine + diphosphate. It functions in the pathway nucleotide-sugar biosynthesis; UDP-N-acetyl-alpha-D-glucosamine biosynthesis; N-acetyl-alpha-D-glucosamine 1-phosphate from alpha-D-glucosamine 6-phosphate (route II): step 2/2. Its pathway is nucleotide-sugar biosynthesis; UDP-N-acetyl-alpha-D-glucosamine biosynthesis; UDP-N-acetyl-alpha-D-glucosamine from N-acetyl-alpha-D-glucosamine 1-phosphate: step 1/1. It participates in bacterial outer membrane biogenesis; LPS lipid A biosynthesis. Functionally, catalyzes the last two sequential reactions in the de novo biosynthetic pathway for UDP-N-acetylglucosamine (UDP-GlcNAc). The C-terminal domain catalyzes the transfer of acetyl group from acetyl coenzyme A to glucosamine-1-phosphate (GlcN-1-P) to produce N-acetylglucosamine-1-phosphate (GlcNAc-1-P), which is converted into UDP-GlcNAc by the transfer of uridine 5-monophosphate (from uridine 5-triphosphate), a reaction catalyzed by the N-terminal domain. This is Bifunctional protein GlmU from Idiomarina loihiensis (strain ATCC BAA-735 / DSM 15497 / L2-TR).